A 262-amino-acid chain; its full sequence is WUSCHEL-related homeobox 11 (262 aa).

A compositionally biased stretch (basic and acidic residues) spans 1–11; sequence MDGGHSPDRHA. 2 disordered regions span residues 1 to 21 and 79 to 115; these read MDGGHSPDRHAAAAAGEPVRS and RRRQRQLQAQAQAAAAAASSGSPPTASSGGLAPGHAG. The homeobox DNA-binding region spans 18–82; it reads PVRSRWTPKP…NRRSRSRRRQ (65 aa). A compositionally biased stretch (low complexity) spans 84–112; it reads QLQAQAQAAAAAASSGSPPTASSGGLAPG.

The protein belongs to the WUS homeobox family. As to quaternary structure, interacts with ERF3.

The protein resides in the nucleus. In terms of biological role, transcription factor which may be involved in developmental processes. Promotes the development of crown roots (both initiation and elongation), main components of the fibrous root system, by regulating the expression of genes required for crown root development and hormone-responsive genes involved in cytokinin (e.g. RR1, RR2, RR3 and RR4) and auxin (e.g. IAA5, IAA11, IAA23 and IAA31) signaling. This chain is WUSCHEL-related homeobox 11, found in Oryza sativa subsp. indica (Rice).